The chain runs to 468 residues: Uronate isomerase (468 aa).

It belongs to the metallo-dependent hydrolases superfamily. Uronate isomerase family.

It catalyses the reaction D-glucuronate = D-fructuronate. The catalysed reaction is aldehydo-D-galacturonate = keto-D-tagaturonate. Its pathway is carbohydrate metabolism; pentose and glucuronate interconversion. This is Uronate isomerase from Bacteroides thetaiotaomicron (strain ATCC 29148 / DSM 2079 / JCM 5827 / CCUG 10774 / NCTC 10582 / VPI-5482 / E50).